The primary structure comprises 118 residues: Large ribosomal subunit protein bL20 (118 aa).

The protein belongs to the bacterial ribosomal protein bL20 family.

Functionally, binds directly to 23S ribosomal RNA and is necessary for the in vitro assembly process of the 50S ribosomal subunit. It is not involved in the protein synthesizing functions of that subunit. This chain is Large ribosomal subunit protein bL20 (rplT), found in Buchnera aphidicola subsp. Acyrthosiphon pisum (strain APS) (Acyrthosiphon pisum symbiotic bacterium).